Here is a 359-residue protein sequence, read N- to C-terminus: Trans-enoyl reductase RAP1 (359 aa).

Residue 49 to 52 participates in NADP(+) binding; sequence CDFK. 137–144 serves as a coordination point for substrate; that stretch reads TCIATACM. NADP(+) contacts are provided by residues 195–198, Y213, and 260–261; these read SPKN and LE. 281–285 serves as a coordination point for substrate; the sequence is GQMIL. 350-351 serves as a coordination point for NADP(+); it reads VA.

This sequence belongs to the zinc-containing alcohol dehydrogenase family. In terms of assembly, monomer.

It functions in the pathway secondary metabolite biosynthesis. In terms of biological role, trans-enoyl reductase; part of the gene cluster that mediates the biosynthesis of a tyrosine-derived cytochalasan acting as a fungal signal recognized by resistant rice plants and leads to avirulence in Pi33 resistant rice cultivars. The first step in the pathway is catalyzed by the hybrid PKS-NRPS ACE1, assisted by the enoyl reductase RAP1, that are responsible for fusion of the tyrosine precursor and the polyketide backbone. The polyketide synthase module (PKS) of ACE1 is responsible for the synthesis of the polyketide backbone and the downstream nonribosomal peptide synthetase (NRPS) amidates the carboxyl end of the polyketide with the tyrosine precursor. Because ACE1 lacks a designated enoylreductase (ER) domain, the required activity is provided the enoyl reductase RAP1. Reduction by the hydrolyase ORFZ, followed by dehydration and intra-molecular Diels-Alder cyclization by the Diels-Alderase ORF3 then yield the required isoindolone-fused macrocycle. A number of oxidative steps catalyzed by the tailoring enzymes identified within the cluster, including cytochrome P450 monooxygenases CYP1 to CYP4, the FAD-linked oxidoreductase OXR2 and the short-chain dehydrogenase/reductase OXR1, are further required to afford the final cytochalasans that confer avirulence and which have still to be identified. The monooxygenase CYP1 has been shown to be a site-selective C-18 hydroxylase whereas the function of CYP3 is the site-selective epoxidation of the C-6/C-7 olefin that is present in some intermediate compounds. Finally, SYN2 and RAP2 are not required for avirulence in Pi33 resistant rice cultivars. The sequence is that of Trans-enoyl reductase RAP1 from Pyricularia oryzae (strain 70-15 / ATCC MYA-4617 / FGSC 8958) (Rice blast fungus).